The following is a 714-amino-acid chain: Polyribonucleotide nucleotidyltransferase (714 aa).

Mg(2+) is bound by residues aspartate 486 and aspartate 492. Residues 553–612 enclose the KH domain; the sequence is PRIITMKINPEKIRDVIGKGGAVIRALTEETGTTIDIEEDGTIKIGCTSAEAGEEAKKRI. The 69-residue stretch at 622–690 folds into the S1 motif domain; the sequence is GQVYDGTVLK…DKGRVRLSAK (69 aa).

This sequence belongs to the polyribonucleotide nucleotidyltransferase family. Mg(2+) is required as a cofactor.

The protein resides in the cytoplasm. It catalyses the reaction RNA(n+1) + phosphate = RNA(n) + a ribonucleoside 5'-diphosphate. Involved in mRNA degradation. Catalyzes the phosphorolysis of single-stranded polyribonucleotides processively in the 3'- to 5'-direction. This chain is Polyribonucleotide nucleotidyltransferase, found in Methylobacillus flagellatus (strain ATCC 51484 / DSM 6875 / VKM B-1610 / KT).